The primary structure comprises 505 residues: Glycerol kinase (505 aa).

An ADP-binding site is contributed by Thr17. ATP-binding residues include Thr17, Thr18, and Ser19. Residue Thr17 participates in sn-glycerol 3-phosphate binding. Arg21 is a binding site for ADP. Residues Arg87, Glu88, Tyr139, and Asp250 each contribute to the sn-glycerol 3-phosphate site. Glycerol contacts are provided by Arg87, Glu88, Tyr139, Asp250, and Gln251. Thr272 and Gly315 together coordinate ADP. Positions 272, 315, 319, and 416 each coordinate ATP. The ADP site is built by Gly416 and Asn420.

This sequence belongs to the FGGY kinase family.

The catalysed reaction is glycerol + ATP = sn-glycerol 3-phosphate + ADP + H(+). It participates in polyol metabolism; glycerol degradation via glycerol kinase pathway; sn-glycerol 3-phosphate from glycerol: step 1/1. Its activity is regulated as follows. Inhibited by fructose 1,6-bisphosphate (FBP). In terms of biological role, key enzyme in the regulation of glycerol uptake and metabolism. Catalyzes the phosphorylation of glycerol to yield sn-glycerol 3-phosphate. This chain is Glycerol kinase, found in Azotobacter vinelandii (strain DJ / ATCC BAA-1303).